The sequence spans 102 residues: Acid shock protein (102 aa).

The signal sequence occupies residues 1 to 21; the sequence is MKKVLALVVAAAMGLSSAAFA. Positions 22 to 58 are excised as a propeptide; sequence AETAITPAPTATTTKAAPAKTTHHKKQHKAAPAQKAQ. Positions 26-41 are enriched in low complexity; the sequence is ITPAPTATTTKAAPAK. The tract at residues 26-102 is disordered; the sequence is ITPAPTATTT…PAKPAAQPAA (77 aa). Basic residues predominate over residues 80 to 90; that stretch reads AAKKHAKKHSH. The segment covering 91–102 has biased composition (low complexity); the sequence is QQPAKPAAQPAA.

It belongs to the Asr family. Post-translationally, proteolytic processing gives rise to the active protein.

It localises to the periplasm. Its function is as follows. Required for growth and/or survival at acidic conditions. The polypeptide is Acid shock protein (Escherichia coli O81 (strain ED1a)).